The sequence spans 98 residues: MPIIYMNIMLAFTISLLGMLIYRSHLMSSLLCLEGMMLSLFIMNTLMALNMHSPLTNIVPITLLVFAACEAAVGLALLVSISSTYGLDHIQNLSLLQC.

3 consecutive transmembrane segments (helical) span residues 1–21 (MPII…GMLI), 29–49 (SLLC…LMAL), and 58–78 (IVPI…LALL).

This sequence belongs to the complex I subunit 4L family. Core subunit of respiratory chain NADH dehydrogenase (Complex I) which is composed of 45 different subunits.

The protein resides in the mitochondrion inner membrane. The catalysed reaction is a ubiquinone + NADH + 5 H(+)(in) = a ubiquinol + NAD(+) + 4 H(+)(out). Its function is as follows. Core subunit of the mitochondrial membrane respiratory chain NADH dehydrogenase (Complex I) which catalyzes electron transfer from NADH through the respiratory chain, using ubiquinone as an electron acceptor. Part of the enzyme membrane arm which is embedded in the lipid bilayer and involved in proton translocation. This Colobus guereza (Mantled guereza) protein is NADH-ubiquinone oxidoreductase chain 4L (MT-ND4L).